Consider the following 929-residue polypeptide: Isoleucine--tRNA ligase (929 aa).

A 'HIGH' region motif is present at residues 57-67 (PYANGNIHVGH). Glu-554 contributes to the L-isoleucyl-5'-AMP binding site. The 'KMSKS' region motif lies at 595 to 599 (KMSKS). An ATP-binding site is contributed by Lys-598. Residues Cys-888, Cys-891, Cys-908, and Cys-911 each coordinate Zn(2+).

Belongs to the class-I aminoacyl-tRNA synthetase family. IleS type 1 subfamily. Monomer. Zn(2+) serves as cofactor.

It is found in the cytoplasm. It carries out the reaction tRNA(Ile) + L-isoleucine + ATP = L-isoleucyl-tRNA(Ile) + AMP + diphosphate. In terms of biological role, catalyzes the attachment of isoleucine to tRNA(Ile). As IleRS can inadvertently accommodate and process structurally similar amino acids such as valine, to avoid such errors it has two additional distinct tRNA(Ile)-dependent editing activities. One activity is designated as 'pretransfer' editing and involves the hydrolysis of activated Val-AMP. The other activity is designated 'posttransfer' editing and involves deacylation of mischarged Val-tRNA(Ile). The chain is Isoleucine--tRNA ligase from Streptococcus thermophilus (strain ATCC BAA-491 / LMD-9).